The primary structure comprises 842 residues: Elongation factor 2 (842 aa).

Residues 17 to 253 form the tr-type G domain; sequence SNVRNMSVIA…LWGENYFNPK (237 aa). Residues 26-33, 104-108, and 158-161 contribute to the GTP site; these read AHVDHGKS, DSPGH, and NKVD. Ser568 carries the phosphoserine modification. Thr574 carries the post-translational modification Phosphothreonine. At His699 the chain carries Diphthamide.

Belongs to the TRAFAC class translation factor GTPase superfamily. Classic translation factor GTPase family. EF-G/EF-2 subfamily.

The protein resides in the cytoplasm. Functionally, catalyzes the GTP-dependent ribosomal translocation step during translation elongation. During this step, the ribosome changes from the pre-translocational (PRE) to the post-translocational (POST) state as the newly formed A-site-bound peptidyl-tRNA and P-site-bound deacylated tRNA move to the P and E sites, respectively. Catalyzes the coordinated movement of the two tRNA molecules, the mRNA and conformational changes in the ribosome. This is Elongation factor 2 (eft201) from Schizosaccharomyces pombe (strain 972 / ATCC 24843) (Fission yeast).